Here is a 1337-residue protein sequence, read N- to C-terminus: Zinc finger protein 335 (1337 aa).

Disordered stretches follow at residues M1–S108 and G198–P226. 2 stretches are compositionally biased toward low complexity: residues T31 to V45 and S54 to G63. Residues F248–H271 form a C2H2-type 1 zinc finger. Residues A278–R444 form a disordered region. Residues D302–E332 show a composition bias toward acidic residues. The span at R351–L362 shows a compositional bias: basic residues. The span at P363–D372 shows a compositional bias: basic and acidic residues. Residues L378–P388 show a composition bias toward polar residues. 8 C2H2-type zinc fingers span residues Y466–H488, F496–H518, Y524–H546, F563–H585, H591–H613, F622–H644, F650–H673, and F679–H702. 2 disordered regions span residues L733–L767 and Q963–T999. A compositionally biased stretch (pro residues) spans P741–P756. 2 positions are modified to phosphoserine: S976 and S1007. C2H2-type zinc fingers lie at residues F1019–H1041, F1047–H1069, H1075–H1097, and F1103–H1126. K1022 is covalently cross-linked (Glycyl lysine isopeptide (Lys-Gly) (interchain with G-Cter in SUMO2)). A Phosphoserine modification is found at S1149.

This sequence belongs to the krueppel C2H2-type zinc-finger protein family. As to quaternary structure, interacts with NCOA6; may enhance ligand-dependent transcriptional activation by nuclear hormone receptors. Interacts with CNOT6. Interacts with CNOT9; the interaction is direct. Component of a nuclear receptor-mediated transcription complex composed of at least ZNF335, CCAR2 and EMSY; the complex stimulates the transcription of nuclear receptor target genes such as SOX9 and HOXA1. Within the complex interacts with EMSY and interacts (via C-terminus) with CCAR2. Interacts with members of histone H3'Lys4'(H3K4) methyltransferase complexes ASH2L, CXXC1, KMT2A/MLL1, RBBP5, SETD1A and WDR5. Component of a histone methylation complex composed of at least ZNF335, RBBP5, ASH2L and WDR5; the complex may have histone H3-specific methyltransferase activity, however does not have specificity for 'Lys-4' of histone H3. Interacts with RBBP5 and WDR5. Interacts with ASHL2. Components of this complex may associate with components of the ZNF335-CCAR2-EMSY nuclear receptor-mediated transcription complex to form a complex at least composed of ZNF335, HCFC1, CCAR2, EMSY, MKI67, RBBP5, ASH2L and WDR5. Within this complex also interacts with HCFC1 and MKI67. Expressed at low levels in cerebral cortex, hippocampus and cerebellum (at protein level).

It is found in the nucleus. In terms of biological role, component or associated component of some histone methyltransferase complexes may regulate transcription through recruitment of those complexes on gene promoters. Enhances ligand-dependent transcriptional activation by nuclear hormone receptors. Plays an important role in neural progenitor cell proliferation and self-renewal through the regulation of specific genes involved brain development, including REST. Also controls the expression of genes involved in somatic development and regulates, for instance, lymphoblast proliferation. In Mus musculus (Mouse), this protein is Zinc finger protein 335 (Znf335).